The following is a 443-amino-acid chain: POU domain, class 3, transcription factor 3-B (443 aa).

3 disordered regions span residues 21–40, 100–150, and 182–244; these read IVHS…VTSV, SPWS…AGAW, and NGML…PTSD. Positions 101–121 are enriched in polar residues; that stretch reads PWSSSPVGMTGSPQQQDVKNN. The span at 210–225 shows a compositional bias: basic residues; the sequence is SHHHHHHHQHQHHQQA. Positions 238-312 constitute a POU-specific domain; that stretch reads EDTPTSDDLE…LLNKWLEEAD (75 aa). S317 is modified (phosphoserine). The homeobox DNA-binding region spans 330-389; it reads KRKKRTSIEVSVKGALESHFLKCPKPSAQEITSLADNLQLEKEVVRVWFCNRRQKEKRMT.

Belongs to the POU transcription factor family. Class-3 subfamily. As to expression, predominantly expressed in the central nervous system.

Its subcellular location is the nucleus. Its function is as follows. Transcription factor that may play important roles in patterning the embryonic brain. The chain is POU domain, class 3, transcription factor 3-B (pou3f3b) from Danio rerio (Zebrafish).